Consider the following 822-residue polypeptide: A disintegrin and metallopeptidase domain 3 (822 aa).

The signal sequence occupies residues 1–16 (MLPLFLVLSYLGQVIA). The Peptidase M12B domain maps to 187–384 (RILRIKIIMD…PELDCLRNTS (198 aa)). 7 cysteine pairs are disulfide-bonded: Cys296–Cys379, Cys338–Cys363, Cys340–Cys345, Cys456–Cys476, Cys623–Cys635, Cys629–Cys641, and Cys643–Cys652. In terms of domain architecture, Disintegrin spans 395-484 (GSYCGNHLLE…GCAPDTKAAD (90 aa)). The region spanning 619-653 (GTRECEADDKCQGHGICNNLNNCQCESGFAPPECD) is the EGF-like domain. The chain crosses the membrane as a helical span at residues 689 to 709 (VLLISFYILLPFLVVLAFMAV).

Interacts with LY6K. Interacts with TEX101. Post-translationally, initially synthesized as a 110-kDa precursor in round spermatids, and the precursor is then processed into a 42-kDa mature protein during the sperm transport into and/or once in the epididymis. Expressed in sperm (at protein level).

The protein localises to the cell membrane. Involved in fertilization by controlling sperm migration into the oviduct. Promotes the binding of sperm to the oocyte zona pellucida. The polypeptide is A disintegrin and metallopeptidase domain 3 (Mus musculus (Mouse)).